The primary structure comprises 129 residues: uncharacterized protein (129 aa).

The chain crosses the membrane as a helical span at residues 5 to 25 (IIGLTLAFFVLFLTAVAILFT).

It is found in the membrane. This is an uncharacterized protein from Mycoplasma pneumoniae (strain ATCC 29342 / M129 / Subtype 1) (Mycoplasmoides pneumoniae).